The following is a 1173-amino-acid chain: DNA-directed RNA polymerase subunit beta (1173 aa).

The protein belongs to the RNA polymerase beta chain family. As to quaternary structure, the RNAP catalytic core consists of 2 alpha, 1 beta, 1 beta' and 1 omega subunit. When a sigma factor is associated with the core the holoenzyme is formed, which can initiate transcription.

The enzyme catalyses RNA(n) + a ribonucleoside 5'-triphosphate = RNA(n+1) + diphosphate. Functionally, DNA-dependent RNA polymerase catalyzes the transcription of DNA into RNA using the four ribonucleoside triphosphates as substrates. The chain is DNA-directed RNA polymerase subunit beta from Kosmotoga olearia (strain ATCC BAA-1733 / DSM 21960 / TBF 19.5.1).